The primary structure comprises 240 residues: Probable septum site-determining protein MinC (240 aa).

This sequence belongs to the MinC family. As to quaternary structure, interacts with MinD and FtsZ.

In terms of biological role, cell division inhibitor that blocks the formation of polar Z ring septums. Rapidly oscillates between the poles of the cell to destabilize FtsZ filaments that have formed before they mature into polar Z rings. Prevents FtsZ polymerization. In Aeromonas hydrophila subsp. hydrophila (strain ATCC 7966 / DSM 30187 / BCRC 13018 / CCUG 14551 / JCM 1027 / KCTC 2358 / NCIMB 9240 / NCTC 8049), this protein is Probable septum site-determining protein MinC.